The chain runs to 309 residues: Olfactory receptor-like protein OLF4 (309 aa).

Residues 1–25 (MELENDTRIPEFLLLGFSEEPKLQP) are Extracellular-facing. A glycan (N-linked (GlcNAc...) asparagine) is linked at Asn-5. A helical transmembrane segment spans residues 26 to 49 (FLFGLFLSMYLVTILGNLLLILAV). Over 50 to 57 (SSDSHLHT) the chain is Cytoplasmic. Residues 58 to 79 (PMYFFLANLSFVDICFTCTTIP) form a helical membrane-spanning segment. Over 80 to 100 (KMLVNIQTQRKVITYESCIIQ) the chain is Extracellular. A helical transmembrane segment spans residues 101 to 120 (MYFFELFAGIDNFLLTVMAY). At 121–139 (DRYMAICYPLHYMVIMNPQ) the chain is on the cytoplasmic side. The chain crosses the membrane as a helical span at residues 140 to 158 (LCSLLLLVSWIMSALHSLL). The Extracellular portion of the chain corresponds to 159 to 196 (QTLMVLRLSFCTHFQIPHFFCELNQMIQLACSDTFLNN). Residues 197–219 (MMLYFAAILLGVAPLVGVLYSYF) traverse the membrane as a helical segment. Topologically, residues 220-236 (KIVSSIRGISSAHSKYK) are cytoplasmic. A helical membrane pass occupies residues 237-260 (AFSTCASHLSVVSLFYCTSLGVYL). Over 261–272 (SSAAPQSTHTSS) the chain is Extracellular. A helical transmembrane segment spans residues 273 to 292 (VASVMYTVVTPMLNPFIYSL). Residues 293 to 309 (RNKDIKGALNVFFRGKP) are Cytoplasmic-facing.

The protein belongs to the G-protein coupled receptor 1 family.

Its subcellular location is the cell membrane. Putative odorant or sperm cell receptor. This Canis lupus familiaris (Dog) protein is Olfactory receptor-like protein OLF4.